A 184-amino-acid chain; its full sequence is Outer-membrane lipoprotein carrier protein (184 aa).

An N-terminal signal peptide occupies residues 1–19 (MKAFLKILMVLIFVSVAYA).

Belongs to the LolA family. As to quaternary structure, monomer.

The protein localises to the periplasm. Functionally, participates in the translocation of lipoproteins from the inner membrane to the outer membrane. Only forms a complex with a lipoprotein if the residue after the N-terminal Cys is not an aspartate (The Asp acts as a targeting signal to indicate that the lipoprotein should stay in the inner membrane). This Helicobacter pylori (strain P12) protein is Outer-membrane lipoprotein carrier protein.